The sequence spans 247 residues: Phycobilisome rod-core linker polypeptide CpcG2 (247 aa).

The region spanning 11-189 (SSQNQRVPGY…YWRDKLESER (179 aa)) is the PBS-linker domain. Positions 223 to 247 (PDTTRNTTPTGIPISVNPSANFPVR) are disordered.

Belongs to the phycobilisome linker protein family. In terms of assembly, part of the phycobilisome, a hemidiscoidal structure that is composed of two distinct substructures: a core complex and a number of rods radiating from the core.

Its subcellular location is the cellular thylakoid membrane. Its function is as follows. Rod-core linker protein required for attachment of phycocyanin to allophycocyanin in cores of phycobilisomes. Functionally, linker polypeptides determine the state of aggregation and the location of the disk-shaped phycobiliprotein units within the phycobilisome and modulate their spectroscopic properties in order to mediate a directed and optimal energy transfer. This Nostoc sp. (strain PCC 7120 / SAG 25.82 / UTEX 2576) protein is Phycobilisome rod-core linker polypeptide CpcG2.